The sequence spans 117 residues: Ribosome-binding factor A (117 aa).

It belongs to the RbfA family. In terms of assembly, monomer. Binds 30S ribosomal subunits, but not 50S ribosomal subunits or 70S ribosomes.

Its subcellular location is the cytoplasm. In terms of biological role, one of several proteins that assist in the late maturation steps of the functional core of the 30S ribosomal subunit. Associates with free 30S ribosomal subunits (but not with 30S subunits that are part of 70S ribosomes or polysomes). Required for efficient processing of 16S rRNA. May interact with the 5'-terminal helix region of 16S rRNA. This is Ribosome-binding factor A from Leptospira interrogans serogroup Icterohaemorrhagiae serovar Lai (strain 56601).